Here is a 389-residue protein sequence, read N- to C-terminus: Phosphopentomutase (389 aa).

D12, D284, H289, D325, H326, and H337 together coordinate Mn(2+).

This sequence belongs to the phosphopentomutase family. Mn(2+) is required as a cofactor.

It localises to the cytoplasm. It catalyses the reaction 2-deoxy-alpha-D-ribose 1-phosphate = 2-deoxy-D-ribose 5-phosphate. It carries out the reaction alpha-D-ribose 1-phosphate = D-ribose 5-phosphate. It functions in the pathway carbohydrate degradation; 2-deoxy-D-ribose 1-phosphate degradation; D-glyceraldehyde 3-phosphate and acetaldehyde from 2-deoxy-alpha-D-ribose 1-phosphate: step 1/2. In terms of biological role, isomerase that catalyzes the conversion of deoxy-ribose 1-phosphate (dRib-1-P) and ribose 1-phosphate (Rib-1-P) to deoxy-ribose 5-phosphate (dRib-5-P) and ribose 5-phosphate (Rib-5-P), respectively. In Anaeromyxobacter sp. (strain Fw109-5), this protein is Phosphopentomutase.